The primary structure comprises 279 residues: MGLPSRQPRLWLLLLVVLGWPQPCLTLDLIPYTPRITSWDLEGKVTATTFSLEQPRCVLDRHSSAADTVWLVVAFSNASRVFQNPQTLAEIPASPRLLTDGHYMTLPLTMDQLPCEDPADGSGRAPVLRVGNDAGCLADLHQPRYCNAPLPGPGPYRVKFLLTNSRGSPQAETRWSDLIALRQGKSPGSIDTWPGRRSGDMIIITSILSSLAGLLLLAFLAASSVRFSSLWWPEEAPEQLRIGSFMGKRYMTHHIPPSEAATLPVGCEPGLERFPSLSP.

The signal sequence occupies residues 1–26; sequence MGLPSRQPRLWLLLLVVLGWPQPCLT. At 27–200 the chain is on the lumenal side; that stretch reads LDLIPYTPRI…DTWPGRRSGD (174 aa). N77 carries N-linked (GlcNAc...) asparagine glycosylation. The helical transmembrane segment at 201–221 threads the bilayer; sequence MIIITSILSSLAGLLLLAFLA. Topologically, residues 222–279 are cytoplasmic; sequence ASSVRFSSLWWPEEAPEQLRIGSFMGKRYMTHHIPPSEAATLPVGCEPGLERFPSLSP.

The protein belongs to the uroplakin-3 family. In terms of assembly, heterodimer with uroplakin-1B (UPK1B). As to expression, expression is urothelium-specific.

Its subcellular location is the cell membrane. Component of the asymmetric unit membrane (AUM); a highly specialized biomembrane elaborated by terminally differentiated urothelial cells. May play an important role in AUM-cytoskeleton interaction in terminally differentiated urothelial cells. It also contributes to the formation of urothelial glycocalyx which may play an important role in preventing bacterial adherence. This Bos taurus (Bovine) protein is Uroplakin-3b (UPK3B).